Reading from the N-terminus, the 278-residue chain is Orotidine 5'-phosphate decarboxylase (278 aa).

Residue lysine 96 is the Proton donor of the active site.

This sequence belongs to the OMP decarboxylase family. Type 2 subfamily.

The catalysed reaction is orotidine 5'-phosphate + H(+) = UMP + CO2. Its pathway is pyrimidine metabolism; UMP biosynthesis via de novo pathway; UMP from orotate: step 2/2. The chain is Orotidine 5'-phosphate decarboxylase from Salinispora arenicola (strain CNS-205).